Here is a 110-residue protein sequence, read N- to C-terminus: U1-lycotoxin-Ls1gg (110 aa).

The first 20 residues, 1–20, serve as a signal peptide directing secretion; that stretch reads MKFVLLFGVLLVTLFSYSSA. Positions 21–44 are excised as a propeptide; that stretch reads EMLDDFDQADEDELLSLIEKEEAR. 3 disulfides stabilise this stretch: Cys54-Cys71, Cys61-Cys89, and Cys73-Cys87.

It belongs to the neurotoxin 19 (CSTX) family. 03 subfamily. Expressed by the venom gland.

Its subcellular location is the secreted. The polypeptide is U1-lycotoxin-Ls1gg (Lycosa singoriensis (Wolf spider)).